The primary structure comprises 496 residues: Aspartic proteinase (496 aa).

The first 24 residues, 1 to 24 (MAKRHLLLVTTCLWALSCALLLHA), serve as a signal peptide directing secretion. The propeptide at 25–59 (SSDGFLRVNLNKKRLDKEDLTAAKLAQQGNRLLKT) is activation peptide. One can recognise a Peptidase A1 domain in the interval 77 to 493 (YYGVIGLGSP…DFGKDRIGFA (417 aa)). D95 is a catalytic residue. Disulfide bonds link C108/C114 and C273/C277. D282 is a catalytic residue. A Saposin B-type domain is found at 307 to 407 (IISTECKEVV…NQLCERLPSP (101 aa)). Disulfide bonds link C312/C401, C337/C373, C343/C370, and C415/C452. An N-linked (GlcNAc...) asparagine glycan is attached at N387.

The protein belongs to the peptidase A1 family.

The protein resides in the vacuole. In terms of biological role, involved in the breakdown of propeptides of storage proteins in protein-storage vacuoles. The polypeptide is Aspartic proteinase (RAP) (Oryza sativa subsp. japonica (Rice)).